The primary structure comprises 714 residues: MKLISSLDGSKTLNANNMETLIECQSEGDIKVPPLLTSCESEDSICQLTEIKKRKKVLSWPSLMRKLSPSSDFSGSLEPELKVSLFDQPLSIICGENDTLPRPIQDILTILCLKGPSTEGIFRKAASEKARKELKEGLNCGVSVNLKQLPVHLLAVVFKDFLRGIPLKLLSCDLFEDWMGALEKPTEEDRIEALKQVAGGLPRPNLLLLRHLLYVLHLISKNAEVNKMDSSNLAICIGPNMLTLKNDQSLSFQAQKDLNNKVKILVEFLIDNCFEIFGENIRTRSRITSDDSLEHTDSSDVSTLQNDSAYDSNDPDVEPTSGAASPNRQLEGPTPTMAGLDTRGQRDTCESSSESSVSMVVRLKSSIVQQDRRFSEPNMSPSRECLVGPTSKQKLARSEDSFTLSQDASCSEGDEAEDPFTEEVFPAVDSKPKRPVDLKIKNWTQGLASPQGHITKAFSRSSPGESLGSSPVPSPSCPKRNFFTRHQSFTTKTDKTKPQREIRKHSMSFSFASHKKVLPRTSSIGSEKSKDFSRDQLQKDLRKESQLSGRIVQENESEIQSQTSLGFSLSGTWALSVDNTFQLVDMRKPGSPPSYEEAIYYQTSGLTAYGGQTVGSMRSRMFKPSTAVPPVPSHHGGDLSEGTPGGHRLSSVTEHWTHSQTVHVSIETQGRSELHQLRTVSESMQKAKLDCLGPQHSHLVFEADQLCCARESYI.

Positions Gln88–Phe277 constitute a Rho-GAP domain. Disordered regions lie at residues Asp290–Val357, Gln370–Pro419, Gln451–Ser508, Arg520–Thr563, and Lys623–Ser650. The span at Ser299–Asp311 shows a compositional bias: polar residues. Ser398 bears the Phosphoserine mark. The segment covering Ser459–Pro471 has biased composition (low complexity). 2 stretches are compositionally biased toward basic and acidic residues: residues Lys492–Glu501 and Glu527–Ser545.

Highly expressed in testis.

In terms of biological role, may function as a GTPase-activating protein. May play a role in transmission ratio distortion (TRD) in mouse, in which heterozygous males for t-locus transmit their t-carrying chromosome to 95% or more of their offspring. This chain is T-cell activation Rho GTPase-activating protein (Tagap), found in Mus musculus (Mouse).